We begin with the raw amino-acid sequence, 517 residues long: Bifunctional purine biosynthesis protein PurH (517 aa).

Residues 1–146 (MAPIALLSVS…KNHAHVAVLT (146 aa)) enclose the MGS-like domain.

The protein belongs to the PurH family.

It carries out the reaction (6R)-10-formyltetrahydrofolate + 5-amino-1-(5-phospho-beta-D-ribosyl)imidazole-4-carboxamide = 5-formamido-1-(5-phospho-D-ribosyl)imidazole-4-carboxamide + (6S)-5,6,7,8-tetrahydrofolate. The enzyme catalyses IMP + H2O = 5-formamido-1-(5-phospho-D-ribosyl)imidazole-4-carboxamide. It functions in the pathway purine metabolism; IMP biosynthesis via de novo pathway; 5-formamido-1-(5-phospho-D-ribosyl)imidazole-4-carboxamide from 5-amino-1-(5-phospho-D-ribosyl)imidazole-4-carboxamide (10-formyl THF route): step 1/1. The protein operates within purine metabolism; IMP biosynthesis via de novo pathway; IMP from 5-formamido-1-(5-phospho-D-ribosyl)imidazole-4-carboxamide: step 1/1. The sequence is that of Bifunctional purine biosynthesis protein PurH from Prochlorococcus marinus (strain MIT 9313).